Here is a 187-residue protein sequence, read N- to C-terminus: Orotate phosphoribosyltransferase (187 aa).

5-phospho-alpha-D-ribose 1-diphosphate is bound by residues R98, K99, K102, H104, and 128–136 (EDVTTTGGS). T132 and R160 together coordinate orotate.

The protein belongs to the purine/pyrimidine phosphoribosyltransferase family. PyrE subfamily. As to quaternary structure, homodimer. Requires Mg(2+) as cofactor.

It carries out the reaction orotidine 5'-phosphate + diphosphate = orotate + 5-phospho-alpha-D-ribose 1-diphosphate. The protein operates within pyrimidine metabolism; UMP biosynthesis via de novo pathway; UMP from orotate: step 1/2. In terms of biological role, catalyzes the transfer of a ribosyl phosphate group from 5-phosphoribose 1-diphosphate to orotate, leading to the formation of orotidine monophosphate (OMP). This Rhodopseudomonas palustris (strain ATCC BAA-98 / CGA009) protein is Orotate phosphoribosyltransferase.